Reading from the N-terminus, the 741-residue chain is Protein lin-54 homolog (741 aa).

Residues 513-626 form the CRC domain; the sequence is PRKPCNCTKS…KCIGCKNFEE (114 aa). Residues 515 to 528 are DNA-binding; it reads KPCNCTKSLCLKLY. Residues cysteine 517, cysteine 519, cysteine 524, cysteine 529, cysteine 531, cysteine 538, cysteine 541, cysteine 543, and cysteine 546 each coordinate Zn(2+). A linker region spans residues 575-588; the sequence is IGKGKEGESDRRHS. The Zn(2+) site is built by cysteine 591, cysteine 593, cysteine 598, cysteine 603, cysteine 605, cysteine 612, cysteine 616, cysteine 618, and cysteine 621. Residues 591–604 are DNA-binding; sequence CNCKRSGCLKNYCE.

It belongs to the lin-54 family. As to quaternary structure, component of the DREAM complex.

The protein resides in the nucleus. Functionally, component of the DREAM complex, a multiprotein complex that can both act as a transcription activator or repressor depending on the context. Specifically recognizes the consensus motif 5'-TTYRAA-3' in target DNA. The chain is Protein lin-54 homolog (lin54) from Xenopus tropicalis (Western clawed frog).